A 193-amino-acid chain; its full sequence is 7-methyl-GTP pyrophosphatase (193 aa).

D69 serves as the catalytic Proton acceptor.

This sequence belongs to the Maf family. YceF subfamily. It depends on a divalent metal cation as a cofactor.

Its subcellular location is the cytoplasm. The catalysed reaction is N(7)-methyl-GTP + H2O = N(7)-methyl-GMP + diphosphate + H(+). Its function is as follows. Nucleoside triphosphate pyrophosphatase that hydrolyzes 7-methyl-GTP (m(7)GTP). May have a dual role in cell division arrest and in preventing the incorporation of modified nucleotides into cellular nucleic acids. This is 7-methyl-GTP pyrophosphatase from Chromohalobacter salexigens (strain ATCC BAA-138 / DSM 3043 / CIP 106854 / NCIMB 13768 / 1H11).